Reading from the N-terminus, the 402-residue chain is uncharacterized protein (402 aa).

Residues 332–402 form a disordered region; sequence MFSSSSSSSE…PEPPPGKPGR (71 aa). Positions 370–379 are enriched in polar residues; the sequence is SETTSLQQYS. The segment covering 393 to 402 has biased composition (pro residues); that stretch reads PEPPPGKPGR.

This is an uncharacterized protein from Mus musculus (Mouse).